The following is a 452-amino-acid chain: uncharacterized protein (452 aa).

Residues 1–452 are disordered; the sequence is MTAVSSNRNP…LRKPEADTAL (452 aa). Composition is skewed to polar residues over residues 29–41, 95–111, 129–144, and 163–176; these read RTGTPRTTAVSSN, SPQTGTPRTTAVSSNRN, SPQTGTPGTTAVSSNR, and SPQTGTPGTTAVSS. Positions 177 to 193 are enriched in basic and acidic residues; that stretch reads NRDHEDDGCLLKQESRG. Composition is skewed to polar residues over residues 197–212, 231–245, 265–280, 299–314, 333–347, 376–394, and 412–426; these read SPQTGTPGTTAVSSNR, SPQTGTPGTTAVSSN, SPQTGTPRTTAVSSNR, SPQTGIPRTTAVSSNR, SPQTGTTRTTAVSSK, and TAVSSNRDPRTTAVSSNRN. Over residues 439-452 the composition is skewed to basic and acidic residues; sequence EPQELRKPEADTAL.

This is an uncharacterized protein from Homo sapiens (Human).